A 387-amino-acid polypeptide reads, in one-letter code: Lymphocyte transmembrane adapter 1 (387 aa).

Topologically, residues 1–37 (MDVTTSAWSETTRRISEPSTLQGTLGSLDKAEDHSSS) are extracellular. The helical; Signal-anchor for type III membrane protein transmembrane segment at 38 to 58 (IFSGFAALLAILLVVAVICVL) threads the bilayer. Residues 59-387 (WCCGKRKKRQ…VCAAEAGARG (329 aa)) lie on the Cytoplasmic side of the membrane. Residues 114–136 (VSTESLLSRNSDSPSSEHVPSRA) form a disordered region. The span at 118–129 (SLLSRNSDSPSS) shows a compositional bias: low complexity. Tyr-195 bears the Phosphotyrosine mark. The disordered stretch occupies residues 230-268 (SEEIDEGCGNASDCTSLGSPGTENSDPLSDGEGSSQTSN). The segment covering 241–268 (SDCTSLGSPGTENSDPLSDGEGSSQTSN) has biased composition (polar residues). Residues Tyr-270 and Tyr-296 each carry the phosphotyrosine modification. The segment at 294 to 387 (RDYENVPPGP…VCAAEAGARG (94 aa)) is disordered. Over residues 319–329 (DHVEGRTDGPE) the composition is skewed to basic and acidic residues. The segment covering 360-369 (PWEDAEETSS) has biased composition (acidic residues). Tyr-375 is subject to Phosphotyrosine.

As to quaternary structure, when phosphorylated, interacts with GRB2, PIK3R1 and GRAP2. Phosphorylated on tyrosines upon TCR or BCR activation; which leads to the recruitment of GRB2, PIK3R1 and GRAP2.

The protein localises to the cell membrane. In terms of biological role, negatively regulates TCR (T-cell antigen receptor)-mediated signaling in T-cells and BCR (B-cell antigen receptor)-mediated signaling in B-cells. The sequence is that of Lymphocyte transmembrane adapter 1 (LAX1) from Bos taurus (Bovine).